The following is a 394-amino-acid chain: Potassium channel subfamily K member 3 (394 aa).

Over 1–8 (MKRQNVRT) the chain is Cytoplasmic. A helical transmembrane segment spans residues 9 to 29 (LALIVCTFTYLLVGAAVFDAL). Asn-53 carries an N-linked (GlcNAc...) asparagine glycan. Positions 78 to 101 (WRFAGSFYFAITVITTIGYGHAAP) form an intramembrane region, pore-forming. Thr-93, Ile-94, Gly-95, and Tyr-96 together coordinate K(+). A selectivity filter 1 region spans residues 93 to 98 (TIGYGH). The chain crosses the membrane as a helical span at residues 108–128 (VFCMFYALLGIPLTLVMFQSL). Residues 129–158 (GERINTLVRYLLHRAKKGLGMRRADVSMAN) lie on the Cytoplasmic side of the membrane. A helical membrane pass occupies residues 159 to 179 (MVLIGFFSCISTLCIGAAAFS). The segment at residues 184–207 (WTFFQAYYYCFITLTTIGFGDYVA) is an intramembrane region (pore-forming). Positions 199, 200, 201, and 202 each coordinate K(+). The tract at residues 199–204 (TIGFGD) is selectivity filter 2. The helical transmembrane segment at 223 to 243 (FSFVYILTGLTVIGAFLNLVV) threads the bilayer. The interval 243–248 (VLRFMT) is X-gate. Topologically, residues 244–394 (LRFMTMNAED…RGLMKRRSSV (151 aa)) are cytoplasmic. Disordered regions lie at residues 266-286 (RNGQAGGGGGGGSAHTTDTAS) and 338-357 (TCVEQSHSSPGGGGRYSDTP). Gly residues predominate over residues 269-278 (QAGGGGGGGS).

It belongs to the two pore domain potassium channel (TC 1.A.1.8) family. Homodimer. Heterodimer with KCNK1. Heterodimer with KCNK9. In terms of tissue distribution, widespread expression in adult. Strongest expression in pancreas and placenta. Lower expression in brain, lung, prostate, heart, kidney, uterus, small intestine and colon.

The protein resides in the cell membrane. The catalysed reaction is K(+)(in) = K(+)(out). It catalyses the reaction Na(+)(in) = Na(+)(out). Its activity is regulated as follows. Inhibited by external acidification, diacylglycerol and anandamide. Activated by halothane and isoflurane. Its function is as follows. K(+) channel that conducts voltage-dependent outward rectifying currents upon membrane depolarization. Voltage sensing is coupled to K(+) electrochemical gradient in an 'ion flux gating' mode where outward but not inward ion flow opens the gate. Changes ion selectivity and becomes permeable to Na(+) ions in response to extracellular acidification. Protonation of the pH sensor His-98 stabilizes C-type inactivation conformation likely converting the channel from outward K(+)-conducting, to inward Na(+)-conducting to nonconductive state. Homo- and heterodimerizes to form functional channels with distinct regulatory and gating properties. Allows K(+) currents with fast-gating kinetics important for the repolarization and hyperpolarization phases of action potentials. In cerebellar granule cells, heteromeric KCNK3:KCNK9 channel may hyperpolarize the resting membrane potential to limit intrinsic neuronal excitability, but once the action potential threshold is reached, it may support high-frequency action potential firing and increased neuronal excitability. Dispensable for central chemosensory respiration i.e. breathing controlled by brainstem CO2/pH, it rather conducts pH-sensitive currents and controls the firing rate of serotonergic raphe neurons involved in potentiation of the respiratory chemoreflex. Additionally, imparts chemosensitivity to type 1 cells in carotid bodies which respond to a decrease in arterial oxygen pressure or an increase in carbon dioxide pressure or pH to initiate adaptive changes in pulmonary ventilation. In adrenal gland, contributes to the maintenance of a hyperpolarized resting membrane potential of aldosterone-producing cells at zona glomerulosa and limits aldosterone release as part of a regulatory mechanism that controls arterial blood pressure and electrolyte homeostasis. In brown adipocytes, mediates K(+) efflux that counteracts norepinephrine-induced membrane depolarization, limits Ca(2+) efflux and downstream cAMP and PKA signaling, ultimately attenuating lipid oxidation and adaptive thermogenesis. This Homo sapiens (Human) protein is Potassium channel subfamily K member 3.